A 521-amino-acid chain; its full sequence is Hyccin (521 aa).

Phosphothreonine is present on Thr-306. Residue Ser-321 is modified to Phosphoserine. Over residues 355 to 373 (AASSTSQSGLSNSSHNCSN) the composition is skewed to low complexity. The disordered stretch occupies residues 355–413 (AASSTSQSGLSNSSHNCSNKTSVGKNQRRSGGSKAGAKERETAGESCRDHFARKQTQRA). Basic and acidic residues predominate over residues 390-406 (GAKERETAGESCRDHFA). Residues Ser-415, Ser-422, Ser-433, Ser-453, and Ser-465 each carry the phosphoserine modification.

The protein belongs to the Hyccin family. As to quaternary structure, component of a phosphatidylinositol 4-kinase (PI4K) complex, composed of PI4KA, EFR3 (EFR3A or EFR3B), TTC7 (TTC7A or TTC7B) and HYCC (HYCC1 or HYCC2). Interacts with TTC7 (TTC7A or TTC7B), interaction is direct. In terms of tissue distribution, predominantly expressed in the central nervous system, where it is found in neurons but not in myelinating cells. Lower abundance is observed in peripheral neurons, where it is detectable only at early postnatal ages. Expressed in both oligodendrocytes and neurons.

Its subcellular location is the cytoplasm. The protein resides in the cytosol. The protein localises to the cell membrane. Functionally, component of a complex required to localize phosphatidylinositol 4-kinase (PI4K) to the plasma membrane. The complex acts as a regulator of phosphatidylinositol 4-phosphate (PtdIns(4)P) synthesis. HYCC1 plays a key role in oligodendrocytes formation, a cell type with expanded plasma membrane that requires generation of PtdIns(4)P. Its role in oligodendrocytes formation probably explains its importance in myelination of the central and peripheral nervous system. May also have a role in the beta-catenin/Lef signaling pathway. The chain is Hyccin (Hycc1) from Mus musculus (Mouse).